The chain runs to 212 residues: FMN-dependent NAD(P)H:quinone oxidoreductase 1 (212 aa).

FMN-binding positions include serine 10, 16–18 (SQS), and 97–100 (MYNF). Asparagine 99 and tyrosine 131 together coordinate substrate. Residues 145–148 (SRGG) and glutamate 187 contribute to the FMN site. Glutamate 188 contacts substrate.

It belongs to the azoreductase type 1 family. Homodimer. Homotetramer formed by a dimer of dimers when the ionic strength is high. The cofactor is FMN.

The enzyme catalyses 2 a quinone + NADPH + H(+) = 2 a 1,4-benzosemiquinone + NADP(+). It carries out the reaction 2 a quinone + NADH + H(+) = 2 a 1,4-benzosemiquinone + NAD(+). The catalysed reaction is N,N-dimethyl-1,4-phenylenediamine + anthranilate + 2 NAD(+) = 2-(4-dimethylaminophenyl)diazenylbenzoate + 2 NADH + 2 H(+). Azoreductase activity increases with salt strength. Functionally, quinone reductase that provides resistance to thiol-specific stress caused by electrophilic quinones. Shows a preference for benzoquinones. Also exhibits azoreductase activity. Catalyzes the reductive cleavage of the azo bond in aromatic azo compounds to the corresponding amines. NADPH is the preferred electron donor for azoreductase activity, but it can also use NADH. Can reduce different classes of azo dyes, including the common azo dyes methyl red and p-aminoazobenzene sulfonamide (PAABSA). Can activate several azo pro-drugs used in the treatment of inflammatory bowel disease (IBD), including balsalazide, sulfasalazine and olsalazine. Also acts as a nitrodeductase, and can reduce and hence activate the nitroaromatic drug nitrofurazone, a broad spectrum antibiotic. In Pseudomonas aeruginosa (strain ATCC 15692 / DSM 22644 / CIP 104116 / JCM 14847 / LMG 12228 / 1C / PRS 101 / PAO1), this protein is FMN-dependent NAD(P)H:quinone oxidoreductase 1.